The sequence spans 255 residues: Chlorocatechol 1,2-dioxygenase (255 aa).

Fe cation-binding residues include Y130, Y164, H188, and H190.

It belongs to the intradiol ring-cleavage dioxygenase family. Fe(3+) serves as cofactor.

It catalyses the reaction 3,5-dichlorocatechol + O2 = (2E,4E)-2,4-dichloromuconate + 2 H(+). It participates in aromatic compound metabolism; 3-chlorocatechol degradation. Its function is as follows. Preferentially converts 3,5-dichlorocatechol as opposed to other chlorinated catechols. Retains diminished activity toward non-chlorinated substrates. This is Chlorocatechol 1,2-dioxygenase (tfdC) from Burkholderia cepacia (Pseudomonas cepacia).